The primary structure comprises 123 residues: Small ribosomal subunit protein uS12 (123 aa).

A disordered region spans residues 1 to 28 (MPTIQQLIRKPRQPKVKRSKSQHLESCP). Residues 9–21 (RKPRQPKVKRSKS) are compositionally biased toward basic residues. Residue Asp-89 is modified to 3-methylthioaspartic acid.

It belongs to the universal ribosomal protein uS12 family. In terms of assembly, part of the 30S ribosomal subunit. Contacts proteins S8 and S17. May interact with IF1 in the 30S initiation complex.

In terms of biological role, with S4 and S5 plays an important role in translational accuracy. Interacts with and stabilizes bases of the 16S rRNA that are involved in tRNA selection in the A site and with the mRNA backbone. Located at the interface of the 30S and 50S subunits, it traverses the body of the 30S subunit contacting proteins on the other side and probably holding the rRNA structure together. The combined cluster of proteins S8, S12 and S17 appears to hold together the shoulder and platform of the 30S subunit. The chain is Small ribosomal subunit protein uS12 from Dinoroseobacter shibae (strain DSM 16493 / NCIMB 14021 / DFL 12).